The following is an 889-amino-acid chain: Low-affinity potassium transport protein (889 aa).

Residues 1 to 51 (MPTAKRTSSRASLALPFQLRLVHKKSWGHRLRDFISGFLKSCRPIAKYVFP) are Cytoplasmic-facing. A helical membrane pass occupies residues 52 to 73 (NFIVVHYIYLITLSIIGSILLY). Over 74–80 (PCKNTAF) the chain is Extracellular. A helical transmembrane segment spans residues 81–101 (IDVLFLAAGASTQGGLATKST). Over 102 to 109 (NDFNLYQQ) the chain is Cytoplasmic. The helical transmembrane segment at 110–130 (IVVYVITLLSTPILIHGFLAF) threads the bilayer. Residues 131–464 (VRLYWFERYF…EYRALRLLCC (334 aa)) lie on the Extracellular side of the membrane. The disordered stretch occupies residues 189-244 (REDPRQSASDVPMDSPDTSALSSISPLNVSSSKEESSDTQSSPPNFSSKRQPSDVD). Residues 207 to 219 (SALSSISPLNVSS) show a composition bias toward low complexity. N-linked (GlcNAc...) asparagine glycosylation is found at Asn-216, Asn-233, and Asn-265. A helical membrane pass occupies residues 465–487 (ILMVYYIGFNILAFVTIVPWACT). Residues 488-499 (RHHYSEIIRRNG) lie on the Cytoplasmic side of the membrane. A helical transmembrane segment spans residues 500-521 (VSPTWWGFFTAMSAFSNLGLSL). Over 522–524 (TAD) the chain is Extracellular. A helical transmembrane segment spans residues 525 to 545 (SMVSFDTAPYPLIFMMFFIII). At 546–548 (GNT) the chain is on the cytoplasmic side. The helical transmembrane segment at 549-569 (GFPIMLRFIIWIMFKTSRDLS) threads the bilayer. Residues 570–584 (QFKESLGFLLDHPRR) lie on the Extracellular side of the membrane. The chain crosses the membrane as a helical span at residues 585–605 (CFTLLFPSGPTWWLFTTLVVL). Residues 606-609 (NATD) are Cytoplasmic-facing. Residues 610 to 630 (WILFIILDFNSAVVRQVAKGY) traverse the membrane as a helical segment. Over 631-657 (RALMGLFQSVCTRTAGFNVVDLSKLHP) the chain is Extracellular. The chain crosses the membrane as a helical span at residues 658-678 (SIQVSYMLMMYVSVLPLAISI). Topologically, residues 679–743 (RRTNVYEEQS…KSFVGAHLRR (65 aa)) are cytoplasmic. Positions 705 to 733 (DDIKETDHDGESEERDTVSTKSKPKKQSP) are disordered. A helical membrane pass occupies residues 744 to 764 (QLSFDLWYLFLGLFIICICEG). At 765 to 776 (RKIEDVNKPDFN) the chain is on the extracellular side. Residues 777–797 (VFAILFEVVSAYGTVGLSLGY) traverse the membrane as a helical segment. Over 798–889 (PNTNTSLSAQ…KIATKFWGKH (92 aa)) the chain is Cytoplasmic.

Belongs to the TrkH potassium transport family.

Its subcellular location is the membrane. Its function is as follows. This protein is required for low-affinity potassium transport. The sequence is that of Low-affinity potassium transport protein (TRK2) from Saccharomyces cerevisiae (strain ATCC 204508 / S288c) (Baker's yeast).